The sequence spans 378 residues: Squalene methyltransferase 2 (378 aa).

Residues 17 to 37 (LLTVKGATGLIAALILGYIII) form a helical membrane-spanning segment.

Belongs to the class I-like SAM-binding methyltransferase superfamily. Erg6/SMT family.

It is found in the microsome membrane. It carries out the reaction squalene + 2 S-adenosyl-L-methionine = 3,22-dimethyl-1,2,23,24-tetradehydro-2,3,22,23-tetrahydrosqualene + 2 S-adenosyl-L-homocysteine + 2 H(+). In terms of biological role, converts squalene to mono- and dimethyl derivatives, but not to tri- and tetramethylated products. Unable to methylate cycloartenol, zymosterol or lanosterol. Methylates both C-3 and C22 positions, but only C-3 position in monomethylated products. Produces mainly monomethylated squalene and only 20% of dimethylated squalene. This is Squalene methyltransferase 2 (TMT-2) from Botryococcus braunii (Green alga).